Reading from the N-terminus, the 384-residue chain is Mitogen-activated protein kinase 8 (384 aa).

The region spanning 26 to 321 is the Protein kinase domain; the sequence is YQNLRPIGSG…VDEALQHPYI (296 aa). ATP contacts are provided by residues 33–38 and Lys55; that span reads GSGAQG. Asp151 (proton acceptor) is an active-site residue. Phosphothreonine is present on Thr183. Residues 183-185 carry the TXY motif; that stretch reads TPY. At Tyr185 the chain carries Phosphotyrosine.

This sequence belongs to the protein kinase superfamily. CMGC Ser/Thr protein kinase family. MAP kinase subfamily. Requires Mg(2+) as cofactor. Post-translationally, dually phosphorylated on Thr-183 and Tyr-185, which activates the enzyme.

The protein localises to the cytoplasm. Its subcellular location is the nucleus. The protein resides in the synapse. It catalyses the reaction L-seryl-[protein] + ATP = O-phospho-L-seryl-[protein] + ADP + H(+). The enzyme catalyses L-threonyl-[protein] + ATP = O-phospho-L-threonyl-[protein] + ADP + H(+). Activated by threonine and tyrosine phosphorylation. Functionally, responds to activation by environmental stress and pro-inflammatory cytokines by phosphorylating a number of transcription factors, primarily components of AP-1 such as c-Jun and ATF2 and thus regulates AP-1 transcriptional activity. May play a role in the regulation of the circadian clock. This is Mitogen-activated protein kinase 8 (mapk8) from Danio rerio (Zebrafish).